Here is a 342-residue protein sequence, read N- to C-terminus: D-erythrose-4-phosphate dehydrogenase (342 aa).

Residue 12 to 13 (RI) participates in NAD(+) binding. Substrate-binding positions include 154–156 (SCT), Arg-200, 213–214 (TK), and Arg-236. Cys-155 functions as the Nucleophile in the catalytic mechanism. Residue Asn-318 participates in NAD(+) binding.

The protein belongs to the glyceraldehyde-3-phosphate dehydrogenase family. Epd subfamily. As to quaternary structure, homotetramer.

It is found in the cytoplasm. It catalyses the reaction D-erythrose 4-phosphate + NAD(+) + H2O = 4-phospho-D-erythronate + NADH + 2 H(+). It functions in the pathway cofactor biosynthesis; pyridoxine 5'-phosphate biosynthesis; pyridoxine 5'-phosphate from D-erythrose 4-phosphate: step 1/5. In terms of biological role, catalyzes the NAD-dependent conversion of D-erythrose 4-phosphate to 4-phosphoerythronate. The sequence is that of D-erythrose-4-phosphate dehydrogenase from Klebsiella pneumoniae (strain 342).